The chain runs to 434 residues: UDP-glucose 6-dehydrogenase (434 aa).

Residues 2–19 (NITFIGSGYVGLVSGVMM), Val-11, Asp-30, Lys-35, Thr-121, and Glu-152 contribute to the NAD(+) site. Residues 148–152 (EFLRE), Lys-204, Asn-208, 249–253 (FLNAG), and Gly-257 contribute to the substrate site. The active-site Nucleophile is the Cys-260. NAD(+) is bound at residue Lys-263. Residue Lys-321 coordinates substrate. Arg-328 provides a ligand contact to NAD(+).

The protein belongs to the UDP-glucose/GDP-mannose dehydrogenase family.

The catalysed reaction is UDP-alpha-D-glucose + 2 NAD(+) + H2O = UDP-alpha-D-glucuronate + 2 NADH + 3 H(+). It functions in the pathway nucleotide-sugar biosynthesis; UDP-alpha-D-glucuronate biosynthesis; UDP-alpha-D-glucuronate from UDP-alpha-D-glucose: step 1/1. The protein is UDP-glucose 6-dehydrogenase (udg) of Rickettsia bellii (strain RML369-C).